We begin with the raw amino-acid sequence, 167 residues long: Minor fimbrial protein PrsF (167 aa).

An N-terminal signal peptide occupies residues M1–L18.

The protein localises to the secreted. The protein resides in the fimbrium. Fimbriae (also called pili), polar filaments radiating from the surface of the bacterium to a length of 0.5-1.5 micrometers and numbering 100-300 per cell, enable bacteria to colonize the epithelium of specific host organs. In Escherichia coli, this protein is Minor fimbrial protein PrsF (prsF).